We begin with the raw amino-acid sequence, 169 residues long: S-ribosylhomocysteine lyase (169 aa).

Fe cation-binding residues include His-54, His-58, and Cys-128.

It belongs to the LuxS family. Homodimer. It depends on Fe cation as a cofactor.

It carries out the reaction S-(5-deoxy-D-ribos-5-yl)-L-homocysteine = (S)-4,5-dihydroxypentane-2,3-dione + L-homocysteine. Involved in the synthesis of autoinducer 2 (AI-2) which is secreted by bacteria and is used to communicate both the cell density and the metabolic potential of the environment. The regulation of gene expression in response to changes in cell density is called quorum sensing. Catalyzes the transformation of S-ribosylhomocysteine (RHC) to homocysteine (HC) and 4,5-dihydroxy-2,3-pentadione (DPD). The polypeptide is S-ribosylhomocysteine lyase (Shewanella sp. (strain MR-4)).